The following is a 477-amino-acid chain: Inner membrane protein YbhI (477 aa).

Residues M1–S5 are Cytoplasmic-facing. Residues L6–A26 form a helical membrane-spanning segment. A topological domain (periplasmic) is located at residue G27. The chain crosses the membrane as a helical span at residues L28 to I48. The Cytoplasmic segment spans residues K49 to P50. The chain crosses the membrane as a helical span at residues F51–L71. Topologically, residues S72 to S87 are periplasmic. A helical membrane pass occupies residues G88–L108. Over G109 to R148 the chain is Cytoplasmic. The chain crosses the membrane as a helical span at residues A149–E169. The Periplasmic segment spans residues K170–G219. The chain crosses the membrane as a helical span at residues G220–I240. Residues Y241–K272 are Cytoplasmic-facing. A helical transmembrane segment spans residues M273–V293. Over D294–T297 the chain is Periplasmic. The helical transmembrane segment at V298–V318 threads the bilayer. At K319 to N356 the chain is on the cytoplasmic side. The chain crosses the membrane as a helical span at residues L357–V377. Residue R378 is a topological domain, periplasmic. A helical membrane pass occupies residues Y379–A399. Topologically, residues N400 to W445 are cytoplasmic. The chain crosses the membrane as a helical span at residues W446–W466. The Periplasmic portion of the chain corresponds to W467 to L477.

It belongs to the SLC13A/DASS transporter (TC 2.A.47) family. DIT1 subfamily.

The protein localises to the cell inner membrane. This chain is Inner membrane protein YbhI (ybhI), found in Escherichia coli (strain K12).